The primary structure comprises 68 residues: Ribosome modulation factor (68 aa).

The protein belongs to the ribosome modulation factor family.

Its subcellular location is the cytoplasm. Functionally, during stationary phase, converts 70S ribosomes to an inactive dimeric form (100S ribosomes). The protein is Ribosome modulation factor of Alcanivorax borkumensis (strain ATCC 700651 / DSM 11573 / NCIMB 13689 / SK2).